A 74-amino-acid polypeptide reads, in one-letter code: Large ribosomal subunit protein bL31 (74 aa).

Zn(2+) is bound by residues C16, C18, C38, and C41.

It belongs to the bacterial ribosomal protein bL31 family. Type A subfamily. Part of the 50S ribosomal subunit. Requires Zn(2+) as cofactor.

Binds the 23S rRNA. The polypeptide is Large ribosomal subunit protein bL31 (Salinispora arenicola (strain CNS-205)).